The following is a 305-amino-acid chain: tRNA pseudouridine synthase B (305 aa).

Residue D48 is the Nucleophile of the active site.

This sequence belongs to the pseudouridine synthase TruB family. Type 1 subfamily.

The enzyme catalyses uridine(55) in tRNA = pseudouridine(55) in tRNA. Functionally, responsible for synthesis of pseudouridine from uracil-55 in the psi GC loop of transfer RNAs. This chain is tRNA pseudouridine synthase B, found in Actinobacillus pleuropneumoniae serotype 5b (strain L20).